A 147-amino-acid polypeptide reads, in one-letter code: 3-dehydroquinate dehydratase (147 aa).

Tyr-23 functions as the Proton acceptor in the catalytic mechanism. Substrate is bound by residues Asn-74, His-80, and Asp-87. The active-site Proton donor is the His-100. Substrate is bound by residues 101-102 (LS) and Arg-111.

It belongs to the type-II 3-dehydroquinase family. Homododecamer.

It catalyses the reaction 3-dehydroquinate = 3-dehydroshikimate + H2O. It functions in the pathway metabolic intermediate biosynthesis; chorismate biosynthesis; chorismate from D-erythrose 4-phosphate and phosphoenolpyruvate: step 3/7. Its function is as follows. Catalyzes a trans-dehydration via an enolate intermediate. In Glaesserella parasuis serovar 5 (strain SH0165) (Haemophilus parasuis), this protein is 3-dehydroquinate dehydratase.